The sequence spans 743 residues: Conserved oligomeric Golgi complex subunit 8 (743 aa).

2 disordered regions span residues 549-672 (EDGP…TEPE) and 704-743 (TQDD…KKDD). Basic and acidic residues-rich tracts occupy residues 563–581 (ESVK…HGTD), 594–621 (PVKE…HETP), 633–647 (SEAK…HLEL), and 654–664 (QEIREQEHKEV). Residues 704-726 (TQDDPIEEEEGWGWGDDDGEEQE) are compositionally biased toward acidic residues. Residues 727 to 743 (ISSKEVESPKEKCKKDD) show a composition bias toward basic and acidic residues.

This sequence belongs to the COG8 family. Component of the conserved oligomeric Golgi complex which is composed of eight different subunits and is required for normal Golgi morphology and localization.

Its subcellular location is the golgi apparatus membrane. Its function is as follows. Required for normal Golgi function. The polypeptide is Conserved oligomeric Golgi complex subunit 8 (cogc-8) (Caenorhabditis elegans).